Reading from the N-terminus, the 91-residue chain is Acylphosphatase (91 aa).

In terms of domain architecture, Acylphosphatase-like spans K3–Q91. Active-site residues include R18 and N36.

Belongs to the acylphosphatase family.

The enzyme catalyses an acyl phosphate + H2O = a carboxylate + phosphate + H(+). The sequence is that of Acylphosphatase (acyP) from Enterococcus faecalis (strain ATCC 700802 / V583).